Consider the following 443-residue polypeptide: Trigger factor (443 aa).

Positions 163–249 (KDAAIIDYQA…LKSLKEEILP (87 aa)) constitute a PPIase FKBP-type domain.

It belongs to the FKBP-type PPIase family. Tig subfamily.

It is found in the cytoplasm. The catalysed reaction is [protein]-peptidylproline (omega=180) = [protein]-peptidylproline (omega=0). In terms of biological role, involved in protein export. Acts as a chaperone by maintaining the newly synthesized protein in an open conformation. Functions as a peptidyl-prolyl cis-trans isomerase. The polypeptide is Trigger factor (Desulfosudis oleivorans (strain DSM 6200 / JCM 39069 / Hxd3) (Desulfococcus oleovorans)).